A 570-amino-acid chain; its full sequence is Putative periplasmic trehalase (570 aa).

The signal sequence occupies residues 1-34; it reads MIPPEIRRSVLLQKAIKLALAGTLLTFASFSATA. Substrate-binding positions include R159, 166–167, N203, 212–214, 284–286, and G317; these read WD, RSQ, and RPE. Catalysis depends on proton donor/acceptor residues D319 and E503. E518 contacts substrate. Residues 544–570 form a disordered region; sequence KPCDSVPSTRPASLSATPTKTPSAATQ. Positions 554–570 are enriched in low complexity; that stretch reads PASLSATPTKTPSAATQ.

This sequence belongs to the glycosyl hydrolase 37 family. In terms of assembly, monomer.

The protein localises to the periplasm. It carries out the reaction alpha,alpha-trehalose + H2O = alpha-D-glucose + beta-D-glucose. Functionally, provides the cells with the ability to utilize trehalose at high osmolarity by splitting it into glucose molecules that can subsequently be taken up by the phosphotransferase-mediated uptake system. This is Putative periplasmic trehalase from Salmonella typhi.